The following is a 281-amino-acid chain: DegV domain-containing protein DR_1986 (281 aa).

The 276-residue stretch at 3 to 278 (IAIVTDSTSD…PGAVGVALEP (276 aa)) folds into the DegV domain. Residues Thr61 and Ser93 each coordinate hexadecanoate.

May bind long-chain fatty acids, such as palmitate, and may play a role in lipid transport or fatty acid metabolism. This Deinococcus radiodurans (strain ATCC 13939 / DSM 20539 / JCM 16871 / CCUG 27074 / LMG 4051 / NBRC 15346 / NCIMB 9279 / VKM B-1422 / R1) protein is DegV domain-containing protein DR_1986.